We begin with the raw amino-acid sequence, 4115 residues long: Transcription-associated protein 1 (4115 aa).

The span at 1-11 (MDPSIPSTSHR) shows a compositional bias: polar residues. 2 disordered regions span residues 1–21 (MDPS…GVQP) and 543–563 (ESEQ…KKTS). Basic and acidic residues predominate over residues 544–563 (SEQKRNELPTPTKEHTKKTS). TPR repeat units follow at residues 1341-1374 (LDGL…LLDL) and 1820-1853 (QDYD…EVIP). The tract at residues 2678–2701 (LEEPEPMEVDQPKNAPAEEPKDNK) is disordered. The region spanning 2808-3421 (LIEFISSKHE…SNGASKVSKS (614 aa)) is the FAT domain. One copy of the TPR 3 repeat lies at 2855–2888 (IETLESLGALYKELAEFDQYSAIWERRSVFPETM). The PI3K/PI4K catalytic domain maps to 3740-4100 (EPYFEIVMRG…CNSLIIRAKD (361 aa)). The segment at 3746–3752 (VMRGGQV) is G-loop. The tract at residues 3959–3967 (NLSPMTPHQ) is catalytic loop. Residues 3979–4006 (NPFYRFELGTGQLMDIEHFAHEVPFRLT) form an activation loop region. Residues 4083-4115 (DAKVKKDDCNSLIIRAKDSDNLSRMPPTYHAWF) enclose the FATC domain.

It belongs to the PI3/PI4-kinase family. TRA1 subfamily.

The protein localises to the nucleus. Influences germ cell fate in hermaphrodites. Acts downstream of tra-2 and tra-3 and through the Tip60 histone acetyltransferase complex to regulate germ cell fate decisions. Required for spermatogenesis and embryonic development. Acts with tra-2 to promote expression of fog-3 and control male tail development. Involved in the negative regulation of vulval development. The sequence is that of Transcription-associated protein 1 from Caenorhabditis briggsae.